Consider the following 316-residue polypeptide: Lys-63-specific deubiquitinase BRCC36 (316 aa).

At alanine 2 the chain carries N-acetylalanine. One can recognise an MPN domain in the interval 12–179; sequence VHLESDAFLV…YTCFQSIQAQ (168 aa). The Zn(2+) site is built by histidine 122, histidine 124, and aspartate 135. The JAMM motif motif lies at 122–135; that stretch reads HSHPHITVWPSHVD. Residue serine 258 is modified to Phosphoserine.

This sequence belongs to the peptidase M67A family. BRCC36 subfamily. In terms of assembly, component of the ARISC complex, at least composed of UIMC1/RAP80, ABRAXAS1, BRCC3/BRCC36, BABAM2 and BABAM1/NBA1. Component of the BRCA1-A complex, at least composed of BRCA1, BARD1, UIMC1/RAP80, ABRAXAS1, BRCC3/BRCC36, babam2 and BABAM1/NBA1. In the BRCA1-A complex, interacts directly with ABRAXAS1 and babam2. Component of the BRISC complex, at least composed of ABRAXAS2, BRCC3/BRCC36, BABAM2 and BABAM1/NBA1. Identified in a complex with SHMT2 and the other subunits of the BRISC complex. In the BRISC complex, interacts directly with ABRAXAS2. Identified in a complex with ABRAXAS2 and NUMA1. The BRISC complex interacts with the CSN complex. Component of the BRCA1/BRCA2 containing complex (BRCC), which also contains BRCA1, BRCA2, BARD1, BABAM2 and RAD51. BRCC is a ubiquitin E3 ligase complex that enhances cellular survival following DNA damage. Interacts with BRCA1. Binds polyubiquitin. Interacts with PWWP2B. Interacts with HDAC1; this interaction is enhanced in the presence of PWWP2B. Requires Zn(2+) as cofactor. In terms of tissue distribution, heart, brain, placenta, lung, liver, skeletal muscle, kidney and pancreas. Aberrantly expressed in the vast majority of breast tumors.

The protein localises to the nucleus. The protein resides in the cytoplasm. It localises to the cytoskeleton. It is found in the spindle pole. Metalloprotease that specifically cleaves 'Lys-63'-linked polyubiquitin chains. Does not have activity toward 'Lys-48'-linked polyubiquitin chains. Component of the BRCA1-A complex, a complex that specifically recognizes 'Lys-63'-linked ubiquitinated histones H2A and H2AX at DNA lesions sites, leading to target the BRCA1-BARD1 heterodimer to sites of DNA damage at double-strand breaks (DSBs). In the BRCA1-A complex, it specifically removes 'Lys-63'-linked ubiquitin on histones H2A and H2AX, antagonizing the RNF8-dependent ubiquitination at double-strand breaks (DSBs). Catalytic subunit of the BRISC complex, a multiprotein complex that specifically cleaves 'Lys-63'-linked ubiquitin in various substrates. Mediates the specific 'Lys-63'-specific deubiquitination associated with the COP9 signalosome complex (CSN), via the interaction of the BRISC complex with the CSN complex. The BRISC complex is required for normal mitotic spindle assembly and microtubule attachment to kinetochores via its role in deubiquitinating NUMA1. Plays a role in interferon signaling via its role in the deubiquitination of the interferon receptor IFNAR1; deubiquitination increases IFNAR1 activity by enhancing its stability and cell surface expression. Acts as a regulator of the NLRP3 inflammasome by mediating deubiquitination of NLRP3, leading to NLRP3 inflammasome assembly. Down-regulates the response to bacterial lipopolysaccharide (LPS) via its role in IFNAR1 deubiquitination. Deubiquitinates HDAC1 and PWWP2B leading to their stabilization. The chain is Lys-63-specific deubiquitinase BRCC36 (BRCC3) from Homo sapiens (Human).